Consider the following 111-residue polypeptide: Somatostatin-1B (111 aa).

The N-terminal stretch at 1–19 is a signal peptide; it reads MQLLSSLVSLLLVLYSVRA. A propeptide spanning residues 20–87 is cleaved from the precursor; it reads AAVLPVEERN…RLEERAVYNR (68 aa). Cysteine 100 and cysteine 111 are oxidised to a cystine.

Belongs to the somatostatin family.

It is found in the secreted. Functionally, somatostatin inhibits the release of somatotropin. In Carassius auratus (Goldfish), this protein is Somatostatin-1B (sst1b).